The following is a 712-amino-acid chain: Frizzled-6 (712 aa).

Residues 1-18 (MEMFTFLLTCVFLPFVRG) form the signal peptide. The FZ domain maps to 19-132 (HSLFTCEPIT…CDRLQYCDET (114 aa)). At 19 to 201 (HSLFTCEPIT…SDELEFAKSF (183 aa)) the chain is on the extracellular side. Disulfide bonds link Cys24–Cys85, Cys32–Cys78, Cys69–Cys106, Cys95–Cys129, and Cys99–Cys123. N-linked (GlcNAc...) asparagine glycosylation is present at Asn38. A helical transmembrane segment spans residues 202-222 (IGIVSIFCLCATLFTFLTFLI). Residues 223–233 (DVKRFRYPERP) are Cytoplasmic-facing. A helical transmembrane segment spans residues 234–254 (IIYYSVCYSIVSLMYFIGFLL). Topologically, residues 255–284 (GDRTACNKADEKLELGDTVVLGSQNKACTV) are extracellular. A helical membrane pass occupies residues 285–305 (LFMFLYFFTMAGTVWWVILTI). The Cytoplasmic portion of the chain corresponds to 306–324 (TWFLAAGRKWSCEAIEQKA). A helical membrane pass occupies residues 325–345 (VWFHAVAWGIPGFLTVMLLAM). The Extracellular portion of the chain corresponds to 346-370 (NKVEGDNISGVCFVGLYDLDASRYF). N-linked (GlcNAc...) asparagine glycosylation is present at Asn352. Residues 371–391 (VLLPLCLCVFVGLSLLLAGII) form a helical membrane-spanning segment. Residues 392-416 (SLNHVRQVIQHDGRNQEKLKKFMIR) lie on the Cytoplasmic side of the membrane. The chain crosses the membrane as a helical span at residues 417 to 437 (IGVFSGLYLVPLVTLLGCYVY). Topologically, residues 438 to 473 (EQVNRITWEITWVSDHCRQYHIPCPYQAKTETRPEL) are extracellular. Residues 474–494 (ALFMIKYLMTLIVGISAVFWV) traverse the membrane as a helical segment. Over 495–712 (GSKKTCTEWA…EHGTGSHSDT (218 aa)) the chain is Cytoplasmic. A Lys-Thr-X-X-X-Trp motif, mediates interaction with the PDZ domain of Dvl family members motif is present at residues 498 to 503 (KTCTEW). The disordered stretch occupies residues 588 to 712 (EIQTSPETSV…EHGTGSHSDT (125 aa)). 2 stretches are compositionally biased toward basic and acidic residues: residues 628–637 (LCEEQADRKG) and 652–664 (TRSE…KSDV). A compositionally biased stretch (polar residues) spans 668–693 (GPMQSSSLQVPGSSEPGSLKGSTSLL). Residues 700–712 (GRKEHGTGSHSDT) show a composition bias toward basic and acidic residues.

Belongs to the G-protein coupled receptor Fz/Smo family. As to quaternary structure, interacts with LMBR1L. Ubiquitinated by ZNRF3, leading to its degradation by the proteasome.

The protein resides in the membrane. Its subcellular location is the cell membrane. It localises to the cell surface. It is found in the apical cell membrane. The protein localises to the cytoplasmic vesicle membrane. The protein resides in the endoplasmic reticulum membrane. Receptor for Wnt proteins. Most of frizzled receptors are coupled to the beta-catenin canonical signaling pathway, which leads to the activation of disheveled proteins, inhibition of GSK-3 kinase, nuclear accumulation of beta-catenin and activation of Wnt target genes. A second signaling pathway involving PKC and calcium fluxes has been seen for some family members, but it is not yet clear if it represents a distinct pathway or if it can be integrated in the canonical pathway, as PKC seems to be required for Wnt-mediated inactivation of GSK-3 kinase. Both pathways seem to involve interactions with G-proteins. Activation by Wnt5A stimulates PKC activity via a G-protein-dependent mechanism. Involved in transduction and intercellular transmission of polarity information during tissue morphogenesis and/or in differentiated tissues. Together with FZD3, is involved in the neural tube closure and plays a role in the regulation of the establishment of planar cell polarity (PCP), particularly in the orientation of asymmetric bundles of stereocilia on the apical faces of a subset of auditory and vestibular sensory cells located in the inner ear. The protein is Frizzled-6 (FZD6) of Canis lupus familiaris (Dog).